The chain runs to 203 residues: Large ribosomal subunit protein bL25 (203 aa).

Belongs to the bacterial ribosomal protein bL25 family. CTC subfamily. Part of the 50S ribosomal subunit; part of the 5S rRNA/L5/L18/L25 subcomplex. Contacts the 5S rRNA. Binds to the 5S rRNA independently of L5 and L18.

Functionally, this is one of the proteins that binds to the 5S RNA in the ribosome where it forms part of the central protuberance. This chain is Large ribosomal subunit protein bL25, found in Pseudomonas savastanoi pv. phaseolicola (strain 1448A / Race 6) (Pseudomonas syringae pv. phaseolicola (strain 1448A / Race 6)).